Consider the following 98-residue polypeptide: Cytochrome c-552 (98 aa).

The first 18 residues, 1–18, serve as a signal peptide directing secretion; it reads MKKFLLVAVVGLAGITFA. 4 residues coordinate heme c: cysteine 28, cysteine 31, histidine 32, and methionine 77.

Belongs to the cytochrome c family. Binds 1 heme c group covalently per subunit.

Its function is as follows. Reacts with hydrogenase. The sequence is that of Cytochrome c-552 from Hydrogenobacter thermophilus (strain DSM 6534 / IAM 12695 / TK-6).